The sequence spans 90 residues: Mitochondrial import inner membrane translocase subunit Tim8 A (90 aa).

The Twin CX3C motif motif lies at 36–59; the sequence is CWDKCMDKPGPKLDSRAEMCFVNC. 2 disulfide bridges follow: Cys36–Cys59 and Cys40–Cys55.

Belongs to the small Tim family. As to quaternary structure, heterohexamer; composed of 3 copies of TIMM8A and 3 copies of TIMM13, named soluble 70 kDa complex. Associates with the TIM22 complex, whose core is composed of TIMM22.

It localises to the mitochondrion inner membrane. In terms of biological role, mitochondrial intermembrane chaperone that participates in the import and insertion of some multi-pass transmembrane proteins into the mitochondrial inner membrane. Also required for the transfer of beta-barrel precursors from the TOM complex to the sorting and assembly machinery (SAM complex) of the outer membrane. Acts as a chaperone-like protein that protects the hydrophobic precursors from aggregation and guide them through the mitochondrial intermembrane space. The TIMM8-TIMM13 complex mediates the import of some proteins while the predominant TIMM9-TIMM10 70 kDa complex mediates the import of much more proteins. The sequence is that of Mitochondrial import inner membrane translocase subunit Tim8 A (timm8a) from Takifugu rubripes (Japanese pufferfish).